The primary structure comprises 114 residues: Cytochrome c2 (114 aa).

The residue at position 1 (glutamine 1) is a Pyrrolidone carboxylic acid. The heme c site is built by cysteine 13, cysteine 16, histidine 17, and methionine 93.

Belongs to the cytochrome c family. Binds 1 heme c group covalently per subunit.

It localises to the periplasm. In terms of biological role, cytochrome c2 is found mainly in purple, non-sulfur, photosynthetic bacteria where it functions as the electron donor to the oxidized bacteriochlorophyll in the photophosphorylation pathway. However, it may also have a role in the respiratory chain and is found in some non-photosynthetic bacteria. The protein is Cytochrome c2 of Rhodopseudomonas palustris.